The chain runs to 505 residues: Cysteine--tRNA ligase (505 aa).

Cys-33 contributes to the Zn(2+) binding site. The 'HIGH' region motif lies at 35 to 45; that stretch reads PTVYDFAHIGN. Cys-229, His-268, and Glu-272 together coordinate Zn(2+). A 'KMSKS' region motif is present at residues 301–305; sequence KMSKS. Lys-304 is a binding site for ATP.

Belongs to the class-I aminoacyl-tRNA synthetase family. As to quaternary structure, monomer. Zn(2+) serves as cofactor.

The protein localises to the cytoplasm. It catalyses the reaction tRNA(Cys) + L-cysteine + ATP = L-cysteinyl-tRNA(Cys) + AMP + diphosphate. The sequence is that of Cysteine--tRNA ligase from Brucella anthropi (strain ATCC 49188 / DSM 6882 / CCUG 24695 / JCM 21032 / LMG 3331 / NBRC 15819 / NCTC 12168 / Alc 37) (Ochrobactrum anthropi).